We begin with the raw amino-acid sequence, 91 residues long: Bombyxin B-1 homolog (91 aa).

The N-terminal stretch at 1 to 19 is a signal peptide; that stretch reads MKVSMFVVIVLCMVAASSA. Disulfide bonds link Cys-27–Cys-78, Cys-39–Cys-91, and Cys-77–Cys-82. Residues 49–69 constitute a propeptide, c peptide like; the sequence is SGAQYARYGWQSPESREGARG.

Belongs to the insulin family. In terms of assembly, heterodimer of a B chain and an A chain linked by two disulfide bonds.

It localises to the secreted. Brain peptide responsible for activation of prothoracic glands to produce ecdysone in insects. This Samia cynthia (Ailanthus silkmoth) protein is Bombyxin B-1 homolog (SBXB1).